We begin with the raw amino-acid sequence, 449 residues long: Biotin carboxylase (449 aa).

A Biotin carboxylation domain is found at 1-445 (MLDKIVIANR…NIHYLEKKLG (445 aa)). Residues lysine 116, lysine 159, 165-166 (GG), 201-204 (EKYL), histidine 209, and histidine 236 each bind ATP. An ATP-grasp domain is found at 120–317 (IAAMKKAGVP…LIKEQLRIAA (198 aa)). Lysine 238 lines the hydrogencarbonate pocket. Residues glutamate 276 and glutamate 288 each coordinate ATP. Mg(2+)-binding residues include glutamate 276, glutamate 288, and asparagine 290. Glutamate 276, glutamate 288, and asparagine 290 together coordinate Mn(2+). 3 residues coordinate hydrogencarbonate: arginine 292, valine 295, and arginine 338. The active site involves arginine 292. Arginine 338 is a biotin binding site.

Acetyl-CoA carboxylase is a heterohexamer of biotin carboxyl carrier protein, biotin carboxylase and the two subunits of carboxyl transferase in a 2:2 complex. Requires Mg(2+) as cofactor. Mn(2+) serves as cofactor.

It catalyses the reaction N(6)-biotinyl-L-lysyl-[protein] + hydrogencarbonate + ATP = N(6)-carboxybiotinyl-L-lysyl-[protein] + ADP + phosphate + H(+). It functions in the pathway lipid metabolism; malonyl-CoA biosynthesis; malonyl-CoA from acetyl-CoA: step 1/1. This protein is a component of the acetyl coenzyme A carboxylase complex; first, biotin carboxylase catalyzes the carboxylation of the carrier protein and then the transcarboxylase transfers the carboxyl group to form malonyl-CoA. The chain is Biotin carboxylase (accC) from Escherichia coli (strain K12).